A 371-amino-acid chain; its full sequence is Poly(rC)-binding protein 3 (371 aa).

KH domains follow at residues 45-95 (TLTI…TITG), 129-182 (PVTL…TISG), and 293-357 (ASTH…QYLI).

Widely expressed, with highest levels in testis and fat tissues and lowest in heart.

Its subcellular location is the cytoplasm. In terms of biological role, single-stranded nucleic acid binding protein that binds preferentially to oligo dC. This chain is Poly(rC)-binding protein 3 (Pcbp3), found in Mus musculus (Mouse).